Consider the following 117-residue polypeptide: Mediator of RNA polymerase II transcription subunit 11 (117 aa).

An N-acetylalanine modification is found at A2.

The protein belongs to the Mediator complex subunit 11 family. In terms of assembly, component of the Mediator complex, which is composed of MED1, MED4, MED6, MED7, MED8, MED9, MED10, MED11, MED12, MED13, MED13L, MED14, MED15, MED16, MED17, MED18, MED19, MED20, MED21, MED22, MED23, MED24, MED25, MED26, MED27, MED29, MED30, MED31, CCNC, CDK8 and CDC2L6/CDK11. The MED12, MED13, CCNC and CDK8 subunits form a distinct module termed the CDK8 module. Mediator containing the CDK8 module is less active than Mediator lacking this module in supporting transcriptional activation. Individual preparations of the Mediator complex lacking one or more distinct subunits have been variously termed ARC, CRSP, DRIP, PC2, SMCC and TRAP. In terms of tissue distribution, expressed in cochlea.

It localises to the nucleus. Functionally, component of the Mediator complex, a coactivator involved in the regulated transcription of nearly all RNA polymerase II-dependent genes. Mediator functions as a bridge to convey information from gene-specific regulatory proteins to the basal RNA polymerase II transcription machinery. Mediator is recruited to promoters by direct interactions with regulatory proteins and serves as a scaffold for the assembly of a functional pre-initiation complex with RNA polymerase II and the general transcription factors. This is Mediator of RNA polymerase II transcription subunit 11 (Med11) from Mus musculus (Mouse).